Here is a 232-residue protein sequence, read N- to C-terminus: TIR domain-containing adapter molecule 2 (232 aa).

Over residues 1–39 the composition is skewed to basic and acidic residues; the sequence is MGVGKSKLDKCPLSWHKKDSVDADQDGHESDSKNSEEAC. The disordered stretch occupies residues 1 to 70; the sequence is MGVGKSKLDK…EAKGAGPEEQ (70 aa). Gly-2 carries N-myristoyl glycine lipidation. The TIR domain occupies 74–226; the sequence is EFLKFVILHA…SIWKETRSVS (153 aa). Phosphotyrosine is present on Tyr-164.

As to quaternary structure, homodimer. Interacts with TLR4, TICAM1, IRF3 and IRF7 in response to LPS. Interacts with IL1R1, IL1RAP, IRAK2, IRAK3 and TRAF6. Interacts with protein kinase-inactive mutants of IRAK1 and IRAK4. Isoform 1 interacts with isoform 2; the interaction occurs in late endosomes and disrupts the interaction between isoform 1 and TICAM1. Interacts with MYD88; the interaction decreases after IL-18 stimulation in a time-dependent manner. Interacts with IL18R1 and IL18RAP. Interacts with TLR2. Interacts with RAB11FIP2. In terms of processing, myristoylated. Required for membrane association which is critical for its ability to initiate efficient signaling. Phosphorylated by PRKCE in response to LPS. Phosphorylation is essential for its function. It is depleted from the membrane upon phosphorylation. Tyrosine phosphorylation is inhibited by phosphatase PTPN4.

The protein localises to the cytoplasm. The protein resides in the golgi apparatus. It localises to the cell membrane. Its subcellular location is the early endosome. It is found in the late endosome. The protein localises to the endoplasmic reticulum. The protein resides in the cell projection. It localises to the phagocytic cup. Functionally, functions as a sorting adapter in different signaling pathways to facilitate downstream signaling leading to type I interferon induction. In TLR4 signaling, physically bridges TLR4 and TICAM1 and functionally transmits signal to TICAM1 in early endosomes after endocytosis of TLR4. In TLR2 signaling, physically bridges TLR2 and MYD88 and is required for the TLR2-dependent movement of MYD88 to endosomes following ligand engagement. Involved in IL-18 signaling and is proposed to function as a sorting adapter for MYD88 in IL-18 signaling during adaptive immune response. Forms a complex with RAB11FIP2 that is recruited to the phagosomes to promote the activation of the actin-regulatory GTPases RAC1 and CDC42 and subsequent phagocytosis of Gram-negative bacteria. This is TIR domain-containing adapter molecule 2 (Ticam2) from Mus musculus (Mouse).